Here is a 337-residue protein sequence, read N- to C-terminus: MIETLDSPANDSDFLDYITALENCTDEQISFKMQYLPVIYSIIFLVGFPGNTVAISIYVFKMRPWKSSTIIMLNLALTDLLYLTSLPFLIHYYASGENWIFGDFMCKFIRFGFHFNLYSSILFLTCFSLFRYIVIIHPMSCFSIQKTRWAVVACAGVWVISLVAVMPMTFLITSTTRTNRSACLDLTSSDDLTTIKWYNLILTATTFCLPLLIVTLCYTTIISTLTHGPRTHSCFKQKARRLTILLLLVFYVCFLPFHILRVIRIESRLLSISCSIESHIHEAYIVSRPLAALNTFGNLLLYVVVSNNFQQAFCSAVRCKAIGDLEQAKKDSCSNNP.

The Extracellular segment spans residues 1-37; that stretch reads MIETLDSPANDSDFLDYITALENCTDEQISFKMQYLP. N-linked (GlcNAc...) asparagine glycosylation is present at Asn-23. A helical transmembrane segment spans residues 38–58; the sequence is VIYSIIFLVGFPGNTVAISIY. At 59–69 the chain is on the cytoplasmic side; the sequence is VFKMRPWKSST. Residues 70 to 90 form a helical membrane-spanning segment; it reads IIMLNLALTDLLYLTSLPFLI. Topologically, residues 91-116 are extracellular; the sequence is HYYASGENWIFGDFMCKFIRFGFHFN. An intrachain disulfide couples Cys-106 to Cys-183. The helical transmembrane segment at 117–137 threads the bilayer; that stretch reads LYSSILFLTCFSLFRYIVIIH. Residues 138 to 151 lie on the Cytoplasmic side of the membrane; that stretch reads PMSCFSIQKTRWAV. The helical transmembrane segment at 152-172 threads the bilayer; sequence VACAGVWVISLVAVMPMTFLI. The Extracellular segment spans residues 173–200; sequence TSTTRTNRSACLDLTSSDDLTTIKWYNL. A helical transmembrane segment spans residues 201–221; that stretch reads ILTATTFCLPLLIVTLCYTTI. Over 222-242 the chain is Cytoplasmic; that stretch reads ISTLTHGPRTHSCFKQKARRL. Residues 243–263 form a helical membrane-spanning segment; the sequence is TILLLLVFYVCFLPFHILRVI. Topologically, residues 264–284 are extracellular; it reads RIESRLLSISCSIESHIHEAY. Residues 285–305 form a helical membrane-spanning segment; sequence IVSRPLAALNTFGNLLLYVVV. The Cytoplasmic portion of the chain corresponds to 306–337; the sequence is SNNFQQAFCSAVRCKAIGDLEQAKKDSCSNNP.

It belongs to the G-protein coupled receptor 1 family. Highly expressed in mast cells and is found predominantly in the tissues of the respiratory tract and kidneys.

Its subcellular location is the cell membrane. Its function is as follows. G protein-coupled receptor for dicarboxylates and amino dicarboxylates. Receptor for itaconate, a metabolite produced by myeloid lineages. In the respiratory epithelium, couples the binding of itaconate to the activation of GNA11 and downstream intracellular Ca(2+) release, leading to mucocilliary clearance of airborne pathogens. Receptor for leukotriene E4 (LTE4) produced by mast cells upon allergic inflammation. Binds with high affinity to LTE4 and elicits mucin release from pulmonary epithelium in response to airborne fungi allergens. Regulates mucin-producing goblet cell homeostasis. Receptor for alpha-ketoglutarate produced by proximal tubule renal cells upon metabolic alkalosis. In an intrarenal paracrine signaling pathway, binds alpha-ketoglutarate and drives transepithelial salt reabsorption and bicarbonate secretion by SLC26A4/pendrin-positive intercalated cells. The polypeptide is 2-oxoglutarate receptor 1 (Oxgr1) (Rattus norvegicus (Rat)).